The sequence spans 714 residues: Polyribonucleotide nucleotidyltransferase (714 aa).

2 residues coordinate Mg(2+): aspartate 488 and aspartate 494. The 60-residue stretch at 555–614 (PRIEVMNIPTDKIRDVIGSGGKVIREIVEKTGAKINIEDDGTVKIASSNGKEIEAAKKWI) folds into the KH domain. One can recognise an S1 motif domain in the interval 624 to 692 (GEIYEGTVVK…ERGKVRLSMK (69 aa)).

It belongs to the polyribonucleotide nucleotidyltransferase family. Requires Mg(2+) as cofactor.

The protein resides in the cytoplasm. It carries out the reaction RNA(n+1) + phosphate = RNA(n) + a ribonucleoside 5'-diphosphate. Functionally, involved in mRNA degradation. Catalyzes the phosphorolysis of single-stranded polyribonucleotides processively in the 3'- to 5'-direction. This Brucella suis biovar 1 (strain 1330) protein is Polyribonucleotide nucleotidyltransferase.